A 451-amino-acid chain; its full sequence is Phosphoglucosamine mutase (451 aa).

Serine 101 serves as the catalytic Phosphoserine intermediate. 4 residues coordinate Mg(2+): serine 101, aspartate 240, aspartate 242, and aspartate 244. Position 101 is a phosphoserine (serine 101).

Belongs to the phosphohexose mutase family. Requires Mg(2+) as cofactor. In terms of processing, activated by phosphorylation.

It catalyses the reaction alpha-D-glucosamine 1-phosphate = D-glucosamine 6-phosphate. Its function is as follows. Catalyzes the conversion of glucosamine-6-phosphate to glucosamine-1-phosphate. The chain is Phosphoglucosamine mutase from Alkalilimnicola ehrlichii (strain ATCC BAA-1101 / DSM 17681 / MLHE-1).